We begin with the raw amino-acid sequence, 290 residues long: 4-diphosphocytidyl-2-C-methyl-D-erythritol kinase (290 aa).

Lysine 14 is a catalytic residue. 103 to 113 (PMGGGLGGGSS) is an ATP binding site. The active site involves aspartate 145.

It belongs to the GHMP kinase family. IspE subfamily. As to quaternary structure, homodimer.

It catalyses the reaction 4-CDP-2-C-methyl-D-erythritol + ATP = 4-CDP-2-C-methyl-D-erythritol 2-phosphate + ADP + H(+). It participates in isoprenoid biosynthesis; isopentenyl diphosphate biosynthesis via DXP pathway; isopentenyl diphosphate from 1-deoxy-D-xylulose 5-phosphate: step 3/6. Catalyzes the phosphorylation of the position 2 hydroxy group of 4-diphosphocytidyl-2C-methyl-D-erythritol. The polypeptide is 4-diphosphocytidyl-2-C-methyl-D-erythritol kinase (Pectobacterium atrosepticum (strain SCRI 1043 / ATCC BAA-672) (Erwinia carotovora subsp. atroseptica)).